A 378-amino-acid polypeptide reads, in one-letter code: Phospho-N-acetylmuramoyl-pentapeptide-transferase (378 aa).

The next 11 helical transmembrane spans lie at 26–46 (LFRLLAIGLLIVTIAYDTGAN), 57–77 (LPWLVSFALVAVLGMAVVPLL), 103–123 (MGGIFFVPTGLGLAFLWTGFA), 127–147 (LSPTVGAIALLVLWYAAIGWW), 171–191 (GIGAALFCAWLVASDPTATVV), 195–215 (WGWVWPLGMAFIPLAIFVPMA), 225–245 (GLDGLAGGTGAIALLTLGIIL), 247–267 (PYPDLQILAVVMSGACLGFLW), 275–295 (VFMGDTGSLALGAVLAGIGLA), 302–322 (LLIVSGLFFVESLSVIAQVLY), and 356–376 (IVRTFYGVVALLGLLCVLLQW).

This sequence belongs to the glycosyltransferase 4 family. MraY subfamily. It depends on Mg(2+) as a cofactor.

The protein resides in the cell inner membrane. The enzyme catalyses UDP-N-acetyl-alpha-D-muramoyl-L-alanyl-gamma-D-glutamyl-meso-2,6-diaminopimeloyl-D-alanyl-D-alanine + di-trans,octa-cis-undecaprenyl phosphate = di-trans,octa-cis-undecaprenyl diphospho-N-acetyl-alpha-D-muramoyl-L-alanyl-D-glutamyl-meso-2,6-diaminopimeloyl-D-alanyl-D-alanine + UMP. Its pathway is cell wall biogenesis; peptidoglycan biosynthesis. In terms of biological role, catalyzes the initial step of the lipid cycle reactions in the biosynthesis of the cell wall peptidoglycan: transfers peptidoglycan precursor phospho-MurNAc-pentapeptide from UDP-MurNAc-pentapeptide onto the lipid carrier undecaprenyl phosphate, yielding undecaprenyl-pyrophosphoryl-MurNAc-pentapeptide, known as lipid I. In Thermosynechococcus vestitus (strain NIES-2133 / IAM M-273 / BP-1), this protein is Phospho-N-acetylmuramoyl-pentapeptide-transferase.